The sequence spans 378 residues: Quinolinate synthase (378 aa).

Residues H59 and S80 each contribute to the iminosuccinate site. [4Fe-4S] cluster is bound at residue C125. Residues 151 to 153 and S168 contribute to the iminosuccinate site; that span reads YAN. C212 contributes to the [4Fe-4S] cluster binding site. Iminosuccinate-binding positions include 238–240 and T255; that span reads HPE. C309 is a binding site for [4Fe-4S] cluster.

This sequence belongs to the quinolinate synthase family. Type 1 subfamily. It depends on [4Fe-4S] cluster as a cofactor.

It localises to the cytoplasm. It carries out the reaction iminosuccinate + dihydroxyacetone phosphate = quinolinate + phosphate + 2 H2O + H(+). The protein operates within cofactor biosynthesis; NAD(+) biosynthesis; quinolinate from iminoaspartate: step 1/1. In terms of biological role, catalyzes the condensation of iminoaspartate with dihydroxyacetone phosphate to form quinolinate. The chain is Quinolinate synthase from Burkholderia pseudomallei (strain 1106a).